The sequence spans 268 residues: Undecaprenyl-diphosphatase (268 aa).

A run of 7 helical transmembrane segments spans residues 47–67 (FAIL…FFKL), 83–103 (FIIG…IAGK), 109–129 (LFDP…LLWV), 144–164 (YPLL…IPGV), 184–204 (AAEF…VYDF), 218–238 (LVAI…KAFL), and 246–266 (FVLF…ALAL).

Belongs to the UppP family.

Its subcellular location is the cell inner membrane. The enzyme catalyses di-trans,octa-cis-undecaprenyl diphosphate + H2O = di-trans,octa-cis-undecaprenyl phosphate + phosphate + H(+). In terms of biological role, catalyzes the dephosphorylation of undecaprenyl diphosphate (UPP). Confers resistance to bacitracin. This chain is Undecaprenyl-diphosphatase, found in Bradyrhizobium sp. (strain BTAi1 / ATCC BAA-1182).